We begin with the raw amino-acid sequence, 320 residues long: HPr kinase/phosphorylase (320 aa).

Residues His-139 and Lys-160 contribute to the active site. 154 to 161 (GDSGVGKS) is a binding site for ATP. Residue Ser-161 participates in Mg(2+) binding. Residue Asp-178 is the Proton acceptor; for phosphorylation activity. Proton donor; for dephosphorylation activity of the active site. The tract at residues 202–211 (MEIRGIGIID) is important for the catalytic mechanism of both phosphorylation and dephosphorylation. Glu-203 contacts Mg(2+). Arg-244 is an active-site residue. The segment at 265-270 (PVKTGR) is important for the catalytic mechanism of dephosphorylation.

The protein belongs to the HPrK/P family. Homohexamer. Requires Mg(2+) as cofactor.

The enzyme catalyses [HPr protein]-L-serine + ATP = [HPr protein]-O-phospho-L-serine + ADP + H(+). The catalysed reaction is [HPr protein]-O-phospho-L-serine + phosphate + H(+) = [HPr protein]-L-serine + diphosphate. Functionally, catalyzes the ATP- as well as the pyrophosphate-dependent phosphorylation of a specific serine residue in HPr, a phosphocarrier protein of the phosphoenolpyruvate-dependent sugar phosphotransferase system (PTS). HprK/P also catalyzes the pyrophosphate-producing, inorganic phosphate-dependent dephosphorylation (phosphorolysis) of seryl-phosphorylated HPr (P-Ser-HPr). The two antagonistic activities of HprK/P are regulated by several intracellular metabolites, which change their concentration in response to the absence or presence of rapidly metabolisable carbon sources (glucose, fructose, etc.) in the growth medium. Therefore, by controlling the phosphorylation state of HPr, HPrK/P is a sensor enzyme that plays a major role in the regulation of carbon metabolism and sugar transport: it mediates carbon catabolite repression (CCR), and regulates PTS-catalyzed carbohydrate uptake and inducer exclusion. This Limosilactobacillus reuteri (strain DSM 20016) (Lactobacillus reuteri) protein is HPr kinase/phosphorylase.